The primary structure comprises 95 residues: uncharacterized protein (95 aa).

Residues 12 to 32 (LASLIVSMVVLVVGLALWFFV) form a helical membrane-spanning segment. Residues 66 to 87 (ANEPEKEAEPATAASEPKEDED) form a disordered region.

It localises to the cell membrane. This is an uncharacterized protein from Salmonella typhi.